The sequence spans 399 residues: Centrosomal protein 43 (399 aa).

The region spanning 70-102 is the LisH domain; sequence DGRLVASLVAEFLQFFNLDFTLAVFHPETSTIQ. 2 disordered regions span residues 142-216 and 236-311; these read PASV…SKSS and DARD…KRGS. 2 positions are modified to phosphoserine: Ser152 and Ser160. The span at 163–172 shows a compositional bias: polar residues; it reads GKSSANSTPS. Thr170 bears the Phosphothreonine mark. Residues 175-186 are compositionally biased toward basic residues; it reads PRYKGQGKKKTI. Over residues 197–216 the composition is skewed to low complexity; sequence SETSQSEPSVSLSESKSKSS. Ser202 carries the post-translational modification Phosphoserine. Over residues 246-256 the composition is skewed to acidic residues; that stretch reads DGDDVEGDSFF. Positions 259-275 are enriched in basic and acidic residues; sequence PIPKPEKTYGWRAEPRK. Over residues 290-302 the composition is skewed to low complexity; the sequence is RSGLSSLAGAPSL. Phosphoserine is present on residues Ser301 and Ser326. The interval 328-354 is disordered; that stretch reads GLGTGEDEDYADDFNSASHRSEKSELS. At Tyr337 the chain carries Phosphotyrosine.

Belongs to the CEP43 family. As to quaternary structure, homodimer. Part of a ternary complex that contains CEP350, CEP43 and MAPRE1. Interacts directly with CEP350 and MAPRE1. Interacts with CEP19. Interacts (via N-terminus) with CEP350 (via C-terminus).

The protein resides in the cytoplasm. It is found in the cytoskeleton. The protein localises to the microtubule organizing center. It localises to the centrosome. Its subcellular location is the centriole. The protein resides in the cilium basal body. Functionally, required for anchoring microtubules to the centrosomes. Required for ciliation. This chain is Centrosomal protein 43, found in Mus musculus (Mouse).